The sequence spans 182 residues: MLQALLIFVLQIIYVPILTIRTILLVKNQTRSAAGVGLLEGAIYIVSLGIVFQDLSNWMNIVAYVIGFSTGLLLGGYIENKLAIGYITYQVSLLDRCNELVDELRHSGFGVTVFEGEGINSIRYRLDIVAKRSREKELLEIINKIAPKAFMSSYEIRSFKGGYLTKAMKKRALMKKKDEHAS.

The next 3 helical transmembrane spans lie at 6–26 (LIFV…ILLV), 32–52 (SAAG…GIVF), and 58–78 (WMNI…GGYI).

It belongs to the UPF0316 family.

The protein resides in the cell membrane. This chain is UPF0316 protein BCG9842_B1857, found in Bacillus cereus (strain G9842).